We begin with the raw amino-acid sequence, 291 residues long: MDPIRKPAWLQKKIIPAAHAEMEGLLKELRLNTVCQQARCPNITECFGKRQATFLILGRICTRLCSFCSVSKETPLPLEPGEAASVAEAVKRLGLSHVVITSPTRDDLPDGGASVYAETVARIRSVSPATKVELLIPDFRGDWAALAAVVESAPDILGHNLETVPRLYSIRSGADYRRSLDLLAQARRMAPGLNTKSGLMLGLGEEEAELFAVMEDLLKAGCGYLSLGQYLAPSRMHHPVQRYVEPELFERYKERALTMGFEHVESAPYVRSSYHAENYLESKFPPPEGEG.

Cys35, Cys40, Cys46, Cys61, Cys65, Cys68, and Ser273 together coordinate [4Fe-4S] cluster. The 216-residue stretch at 47-262 (FGKRQATFLI…KERALTMGFE (216 aa)) folds into the Radical SAM core domain.

This sequence belongs to the radical SAM superfamily. Lipoyl synthase family. [4Fe-4S] cluster serves as cofactor.

It localises to the cytoplasm. It carries out the reaction [[Fe-S] cluster scaffold protein carrying a second [4Fe-4S](2+) cluster] + N(6)-octanoyl-L-lysyl-[protein] + 2 oxidized [2Fe-2S]-[ferredoxin] + 2 S-adenosyl-L-methionine + 4 H(+) = [[Fe-S] cluster scaffold protein] + N(6)-[(R)-dihydrolipoyl]-L-lysyl-[protein] + 4 Fe(3+) + 2 hydrogen sulfide + 2 5'-deoxyadenosine + 2 L-methionine + 2 reduced [2Fe-2S]-[ferredoxin]. It functions in the pathway protein modification; protein lipoylation via endogenous pathway; protein N(6)-(lipoyl)lysine from octanoyl-[acyl-carrier-protein]: step 2/2. In terms of biological role, catalyzes the radical-mediated insertion of two sulfur atoms into the C-6 and C-8 positions of the octanoyl moiety bound to the lipoyl domains of lipoate-dependent enzymes, thereby converting the octanoylated domains into lipoylated derivatives. In Citrifermentans bemidjiense (strain ATCC BAA-1014 / DSM 16622 / JCM 12645 / Bem) (Geobacter bemidjiensis), this protein is Lipoyl synthase.